A 1034-amino-acid chain; its full sequence is Ubiquitin-like-specific protease 2 (1034 aa).

Disordered regions lie at residues 1–42, 71–110, 388–419, 731–800, 841–960, and 983–1034; these read MSAR…FRKD, IELSDNDVDNNDEGEGVNSGCSDQDFEPLQSSPLKRHSSL, SHAVSQLRRSNRFKDVSDPANSNSNSEFDDAT, IDQS…PIRH, GVSS…DSLG, and SSPT…DEDP. Over residues 19–33 the composition is skewed to low complexity; it reads SSRASSPRSSASLPP. A compositionally biased stretch (acidic residues) spans 74–85; that stretch reads SDNDVDNNDEGE. The segment covering 743–756 has biased composition (low complexity); it reads TSEPPCSRSSSIST. Serine 788 carries the phosphoserine modification. Composition is skewed to polar residues over residues 845-856, 876-904, and 912-923; these read PIKNDQALSSTH, QLSSHVQSLSTDSMERQSSPNNTNIVISD, and GVNSESKNTSGI. Serine 903 is subject to Phosphoserine. Phosphoserine occurs at positions 983 and 984. Over residues 992 to 1017 the composition is skewed to polar residues; it reads TSATSKGSNAQLLSNYGDENNQSQDS.

Belongs to the peptidase C48 family.

Insertion mutation in SMT4 confers temperature and benomyl sensitivity; high copy suppressor of a temperature sensitive mutation in MIF2. This is Ubiquitin-like-specific protease 2 (ULP2) from Saccharomyces cerevisiae (strain ATCC 204508 / S288c) (Baker's yeast).